The sequence spans 160 residues: 6,7-dimethyl-8-ribityllumazine synthase (160 aa).

5-amino-6-(D-ribitylamino)uracil-binding positions include tryptophan 28, 59–61 (ALE), and 81–83 (CVI). Residue 86 to 87 (ET) coordinates (2S)-2-hydroxy-3-oxobutyl phosphate. Residue histidine 89 is the Proton donor of the active site. Asparagine 114 lines the 5-amino-6-(D-ribitylamino)uracil pocket. Residue arginine 128 participates in (2S)-2-hydroxy-3-oxobutyl phosphate binding.

The protein belongs to the DMRL synthase family.

It carries out the reaction (2S)-2-hydroxy-3-oxobutyl phosphate + 5-amino-6-(D-ribitylamino)uracil = 6,7-dimethyl-8-(1-D-ribityl)lumazine + phosphate + 2 H2O + H(+). Its pathway is cofactor biosynthesis; riboflavin biosynthesis; riboflavin from 2-hydroxy-3-oxobutyl phosphate and 5-amino-6-(D-ribitylamino)uracil: step 1/2. In terms of biological role, catalyzes the formation of 6,7-dimethyl-8-ribityllumazine by condensation of 5-amino-6-(D-ribitylamino)uracil with 3,4-dihydroxy-2-butanone 4-phosphate. This is the penultimate step in the biosynthesis of riboflavin. This is 6,7-dimethyl-8-ribityllumazine synthase from Corynebacterium urealyticum (strain ATCC 43042 / DSM 7109).